A 401-amino-acid chain; its full sequence is Imidazolonepropionase (401 aa).

Fe(3+)-binding residues include His-66 and His-68. 2 residues coordinate Zn(2+): His-66 and His-68. 4-imidazolone-5-propanoate contacts are provided by Arg-75, Tyr-138, and His-171. Tyr-138 provides a ligand contact to N-formimidoyl-L-glutamate. His-236 lines the Fe(3+) pocket. His-236 is a Zn(2+) binding site. Residue Gln-239 coordinates 4-imidazolone-5-propanoate. Asp-311 serves as a coordination point for Fe(3+). Position 311 (Asp-311) interacts with Zn(2+). N-formimidoyl-L-glutamate-binding residues include Asn-313 and Gly-315. Thr-316 provides a ligand contact to 4-imidazolone-5-propanoate.

Belongs to the metallo-dependent hydrolases superfamily. HutI family. Zn(2+) is required as a cofactor. It depends on Fe(3+) as a cofactor.

Its subcellular location is the cytoplasm. It catalyses the reaction 4-imidazolone-5-propanoate + H2O = N-formimidoyl-L-glutamate. It participates in amino-acid degradation; L-histidine degradation into L-glutamate; N-formimidoyl-L-glutamate from L-histidine: step 3/3. In terms of biological role, catalyzes the hydrolytic cleavage of the carbon-nitrogen bond in imidazolone-5-propanoate to yield N-formimidoyl-L-glutamate. It is the third step in the universal histidine degradation pathway. The polypeptide is Imidazolonepropionase (Acinetobacter baumannii (strain AB0057)).